The primary structure comprises 479 residues: Membrane-bound lytic murein transglycosylase F (479 aa).

A signal peptide spans M1 to A18. A non-LT domain region spans residues I19–L266. Residues N267–R479 are LT domain. Residue E311 is part of the active site.

The protein in the N-terminal section; belongs to the bacterial solute-binding protein 3 family. It in the C-terminal section; belongs to the transglycosylase Slt family.

Its subcellular location is the cell outer membrane. It carries out the reaction Exolytic cleavage of the (1-&gt;4)-beta-glycosidic linkage between N-acetylmuramic acid (MurNAc) and N-acetylglucosamine (GlcNAc) residues in peptidoglycan, from either the reducing or the non-reducing ends of the peptidoglycan chains, with concomitant formation of a 1,6-anhydrobond in the MurNAc residue.. Its function is as follows. Murein-degrading enzyme that degrades murein glycan strands and insoluble, high-molecular weight murein sacculi, with the concomitant formation of a 1,6-anhydromuramoyl product. Lytic transglycosylases (LTs) play an integral role in the metabolism of the peptidoglycan (PG) sacculus. Their lytic action creates space within the PG sacculus to allow for its expansion as well as for the insertion of various structures such as secretion systems and flagella. This Histophilus somni (strain 2336) (Haemophilus somnus) protein is Membrane-bound lytic murein transglycosylase F.